The chain runs to 181 residues: Small ribosomal subunit protein uS4 (181 aa).

One can recognise an S4 RNA-binding domain in the interval 108–180 (RRLQTIVYRK…GERQRIMNQR (73 aa)).

This sequence belongs to the universal ribosomal protein uS4 family. In terms of assembly, part of the 30S ribosomal subunit. Contacts protein S5. The interaction surface between S4 and S5 is involved in control of translational fidelity.

In terms of biological role, one of the primary rRNA binding proteins, it binds directly to 16S rRNA where it nucleates assembly of the body of the 30S subunit. With S5 and S12 plays an important role in translational accuracy. The polypeptide is Small ribosomal subunit protein uS4 (Methanocorpusculum labreanum (strain ATCC 43576 / DSM 4855 / Z)).